The sequence spans 504 residues: Anaerobic nitric oxide reductase transcription regulator NorR (504 aa).

D57 bears the 4-aspartylphosphate mark. In terms of domain architecture, Sigma-54 factor interaction spans 187 to 416; that stretch reads MIGLSPGMTQ…LEHAIHRAVV (230 aa). Residues 215–222 and 278–287 contribute to the ATP site; these read GETGTGKE and ADNGTLFLDE. Residues 479-498 constitute a DNA-binding region (H-T-H motif); the sequence is WAASARMLETDVANLHRLAK.

It functions in the pathway nitrogen metabolism; nitric oxide reduction. Functionally, required for the expression of anaerobic nitric oxide (NO) reductase, acts as a transcriptional activator for at least the norVW operon. Activation also requires sigma-54. This is Anaerobic nitric oxide reductase transcription regulator NorR from Escherichia coli (strain SMS-3-5 / SECEC).